Consider the following 393-residue polypeptide: MTVPATRNDLMIVNMGPHHPSMHGVLRLIVTLDGEDVIDCEPILGYLHRGMEKIAENRTIIQYLPYVTRWDYLATMFTEAITVNAPEELGNIQVPRRASYIRVIMLELSRIASHLLWLGPFMADIGAQTPFFYIFRERELLYDLFETATGMRMMHNFFRIGGVAADLPHGWIDKCLDFCDYFLPEVAEYQKLITRNPIFLERVEGVGFIAEEEAINWGLSGPMLRASGIPWDLRKVDHYECYDEFDWEVQWQKEGDSLARYLVRISEMIESVKIIQQALEGIPGGPYENLEARRFDRVRNIEWNDFEYRFISKKPSPTFELSKQELYVRVEAPKGELGIFLIGDNSVFPWRWKIRPPGLINLQILPQLVKRMKLADIMTILGSIDIIMGEVDR.

Belongs to the complex I 49 kDa subunit family. As to quaternary structure, NDH is composed of at least 16 different subunits, 5 of which are encoded in the nucleus.

The protein localises to the plastid. It localises to the chloroplast thylakoid membrane. The enzyme catalyses a plastoquinone + NADH + (n+1) H(+)(in) = a plastoquinol + NAD(+) + n H(+)(out). It catalyses the reaction a plastoquinone + NADPH + (n+1) H(+)(in) = a plastoquinol + NADP(+) + n H(+)(out). Functionally, NDH shuttles electrons from NAD(P)H:plastoquinone, via FMN and iron-sulfur (Fe-S) centers, to quinones in the photosynthetic chain and possibly in a chloroplast respiratory chain. The immediate electron acceptor for the enzyme in this species is believed to be plastoquinone. Couples the redox reaction to proton translocation, and thus conserves the redox energy in a proton gradient. This Amborella trichopoda protein is NAD(P)H-quinone oxidoreductase subunit H, chloroplastic.